The primary structure comprises 277 residues: Uridine-cytidine kinase 1 (277 aa).

Position 24-32 (24-32) interacts with ATP; that stretch reads GGTASGKST. Substrate-binding residues include D81, Y109, H114, R163, R172, and Q180. D209 provides a ligand contact to ATP. Residues 241-277 form a disordered region; that stretch reads NHGRSLKRGVAEHGENPSGSSSNLTKRPLLEPSTRPH.

This sequence belongs to the uridine kinase family.

It carries out the reaction uridine + ATP = UMP + ADP + H(+). It catalyses the reaction cytidine + ATP = CMP + ADP + H(+). The protein operates within pyrimidine metabolism; CTP biosynthesis via salvage pathway; CTP from cytidine: step 1/3. It participates in pyrimidine metabolism; UMP biosynthesis via salvage pathway; UMP from uridine: step 1/1. Functionally, phosphorylates uridine and cytidine to uridine monophosphate and cytidine monophosphate. Does not phosphorylate deoxyribonucleosides or purine ribonucleosides. Can use ATP or GTP as a phosphate donor. This chain is Uridine-cytidine kinase 1 (uck1), found in Danio rerio (Zebrafish).